The sequence spans 232 residues: Flagellar L-ring protein (232 aa).

Positions 1-21 are cleaved as a signal peptide; sequence MQKNAAHTYAISSLLVLSLTG. Cys-22 is lipidated: N-palmitoyl cysteine. Cys-22 is lipidated: S-diacylglycerol cysteine.

This sequence belongs to the FlgH family. As to quaternary structure, the basal body constitutes a major portion of the flagellar organelle and consists of four rings (L,P,S, and M) mounted on a central rod.

It localises to the cell outer membrane. Its subcellular location is the bacterial flagellum basal body. Its function is as follows. Assembles around the rod to form the L-ring and probably protects the motor/basal body from shearing forces during rotation. The polypeptide is Flagellar L-ring protein (Shigella boydii serotype 4 (strain Sb227)).